A 240-amino-acid chain; its full sequence is Uridylate kinase (240 aa).

ATP is bound at residue 13–16 (KASG). The interval 21-26 (GSQGFG) is involved in allosteric activation by GTP. Gly55 contributes to the UMP binding site. The ATP site is built by Gly56 and Arg60. Residues Asp75 and 136-143 (TGNPFFTT) each bind UMP. Positions 163, 164, 169, and 172 each coordinate ATP.

The protein belongs to the UMP kinase family. In terms of assembly, homohexamer.

Its subcellular location is the cytoplasm. The enzyme catalyses UMP + ATP = UDP + ADP. The protein operates within pyrimidine metabolism; CTP biosynthesis via de novo pathway; UDP from UMP (UMPK route): step 1/1. Its activity is regulated as follows. Allosterically activated by GTP. Inhibited by UTP. Its function is as follows. Catalyzes the reversible phosphorylation of UMP to UDP. The chain is Uridylate kinase from Sinorhizobium medicae (strain WSM419) (Ensifer medicae).